Consider the following 3225-residue polypeptide: Intermembrane lipid transfer protein VPS13 (3225 aa).

Residues Met-1 to Thr-1390 form an involved in phospholipid binding region. Residues Leu-2 to Asp-115 enclose the Chorein N-terminal domain. 2 disordered regions span residues Pro-1568–Val-1610 and Ala-1768–Gly-1799. Residues Val-1590–Val-1610 show a composition bias toward low complexity. The span at Gly-1777–Gly-1799 shows a compositional bias: polar residues. Residues Phe-2290–Lys-2570 enclose the SHR-BD domain.

It belongs to the VPS13 family.

The protein resides in the membrane. Its function is as follows. Mediates the transfer of lipids between membranes at organelle contact sites. Binds phospholipids, including phosphatidylcholine (PC), phosphatidylethanolamine (PE), phosphatidic acid (PA), and phosphatidylserine (PS). May play a role in mitochondrial lipid homeostasis, Golgi vesicle transport, reticulophagy, actin cytoskeleton organization and formation of the prospore membrane. This chain is Intermembrane lipid transfer protein VPS13, found in Chaetomium thermophilum (strain DSM 1495 / CBS 144.50 / IMI 039719) (Thermochaetoides thermophila).